Here is a 217-residue protein sequence, read N- to C-terminus: Phosphoribosylformylglycinamidine synthase subunit PurQ (217 aa).

Residues 2–217 (SIGVLVFPGS…GRVLLQGLLS (216 aa)) enclose the Glutamine amidotransferase type-1 domain. The active-site Nucleophile is Cys-86. Residues His-194 and Glu-196 contribute to the active site.

Part of the FGAM synthase complex composed of 1 PurL, 1 PurQ and 2 PurS subunits.

It is found in the cytoplasm. It carries out the reaction N(2)-formyl-N(1)-(5-phospho-beta-D-ribosyl)glycinamide + L-glutamine + ATP + H2O = 2-formamido-N(1)-(5-O-phospho-beta-D-ribosyl)acetamidine + L-glutamate + ADP + phosphate + H(+). It catalyses the reaction L-glutamine + H2O = L-glutamate + NH4(+). The protein operates within purine metabolism; IMP biosynthesis via de novo pathway; 5-amino-1-(5-phospho-D-ribosyl)imidazole from N(2)-formyl-N(1)-(5-phospho-D-ribosyl)glycinamide: step 1/2. Functionally, part of the phosphoribosylformylglycinamidine synthase complex involved in the purines biosynthetic pathway. Catalyzes the ATP-dependent conversion of formylglycinamide ribonucleotide (FGAR) and glutamine to yield formylglycinamidine ribonucleotide (FGAM) and glutamate. The FGAM synthase complex is composed of three subunits. PurQ produces an ammonia molecule by converting glutamine to glutamate. PurL transfers the ammonia molecule to FGAR to form FGAM in an ATP-dependent manner. PurS interacts with PurQ and PurL and is thought to assist in the transfer of the ammonia molecule from PurQ to PurL. The chain is Phosphoribosylformylglycinamidine synthase subunit PurQ from Parasynechococcus marenigrum (strain WH8102).